A 245-amino-acid polypeptide reads, in one-letter code: Triosephosphate isomerase (245 aa).

A substrate-binding site is contributed by 4-6 (NWK). Histidine 91 acts as the Electrophile in catalysis. Glutamate 161 serves as the catalytic Proton acceptor. Residues glycine 167, serine 207, and 228–229 (GG) each bind substrate.

Belongs to the triosephosphate isomerase family. Homodimer.

It is found in the cytoplasm. It catalyses the reaction D-glyceraldehyde 3-phosphate = dihydroxyacetone phosphate. It functions in the pathway carbohydrate biosynthesis; gluconeogenesis. Its pathway is carbohydrate degradation; glycolysis; D-glyceraldehyde 3-phosphate from glycerone phosphate: step 1/1. Functionally, involved in the gluconeogenesis. Catalyzes stereospecifically the conversion of dihydroxyacetone phosphate (DHAP) to D-glyceraldehyde-3-phosphate (G3P). The sequence is that of Triosephosphate isomerase from Chlorobaculum tepidum (strain ATCC 49652 / DSM 12025 / NBRC 103806 / TLS) (Chlorobium tepidum).